The primary structure comprises 421 residues: Prenyltransferase asqH2 (421 aa).

Positions 1–28 are disordered; it reads MDRNSFTAYGPATGAITESGEQENDHTK. Residue glutamate 105 participates in L-tryptophan binding. Residues arginine 119, arginine 272, lysine 274, tyrosine 276, and tyrosine 341 each contribute to the substrate site.

This sequence belongs to the tryptophan dimethylallyltransferase family.

The enzyme catalyses yaequinolone E + dimethylallyl diphosphate + H2O = [(1'E)-3'-hydroxy-3',7'-dimethylocta-1',6'-dien-1'-yl]-quinolinone B + diphosphate. Its pathway is secondary metabolite biosynthesis. It functions in the pathway alkaloid biosynthesis. The protein operates within mycotoxin biosynthesis. Its function is as follows. Prenyltransferase; part of the gene cluster that mediates the biosynthesis of the aspoquinolone mycotoxins. Within the pathway, the prenyltransferase asqH2 performs the second alkylation with DMAPP at delta(3') double bond to yield a carbenium ion intermediate, which can be attacked by H(2)O to yield a styrenyl quinolone containing a C3'-hydroxyprenyl chain. The first step of the pathway is catalyzed by the nonribosomal peptide synthetase asqK that condenses anthranilic acid and O-methyl-L-tyrosine to produce 4'-methoxycyclopeptin. 4'-methoxycyclopeptin is then converted to 4'-methoxydehydrocyclopeptin by the ketoglutarate-dependent dioxygenase asqJ. AsqJ also converts its first product 4'-methoxydehydrocyclopeptin to 4'-methoxycyclopenin. The following conversion of 4'-methoxycyclopenin into 4'-methoxyviridicatin is catalyzed by the cyclopenase asqI. 4'-methoxyviridicatin is the precursor of quinolone natural products, and is further converted to quinolinone B. The prenyltransferase asqH1 then catalyzes the canonical Friedel-Crafts alkylation of quinolinone B with dimethylallyl cation to yield dimethylallyl quinolone, which is subjected to FAD-dependent dehydrogenation by the FAD-linked oxidoreductase asqF to yield conjugated aryl diene. The delta(3') double bond then serves as the site of the second alkylation with DMAPP catalyzed by the prenyltransferase asqH2 to yield a carbenium ion intermediate, which can be attacked by H(2)O to yield a styrenyl quinolone containing a C3'-hydroxyprenyl chain. The FAD-dependent monooxygenase asqG performs epoxidation of the terminal C7'-C8' olefin. Finally, after dehydratation of the epoxide at C3 by asqC, the quinolone epoxide rearrangement protein asqO catalyzes an enzymatic 3-exo-tet cyclization to yield the cyclopropyl-THF ring system in aspoquinolone. This Emericella nidulans (strain FGSC A4 / ATCC 38163 / CBS 112.46 / NRRL 194 / M139) (Aspergillus nidulans) protein is Prenyltransferase asqH2.